The primary structure comprises 303 residues: Cell wall mannoprotein HSP150 (303 aa).

Positions 1 to 18 (MQYKKTLVASALAATTLA) are cleaved as a signal peptide. Residues 19–72 (AYAPSEPWSTLTPTATYSGGVTDYASTFGIAVQPISTTSSASSAATTASSKAKR) constitute a propeptide that is removed on maturation. PIR1/2/3 repeat units lie at residues 71–89 (KRAASQIGDGQVQAATTTA) and 97–113 (AAAVSQIGDGQIQATTK). The stretch at 114 to 134 (TTAAASLKLVMVKIQATTKTT) is one PIR1/2/3 3; degenerate repeat. PIR1/2/3 repeat units follow at residues 135 to 153 (AAAVSQIGDGQVQATTKTT), 154 to 171 (AAAVSQITDGQVQATTKT), and 172 to 190 (TQAASQVSDGQVQATSATS).

This sequence belongs to the PIR protein family. Post-translationally, covalently linked to beta-1,3-glucan of the inner cell wall layer via an alkali-sensitive ester linkage between the gamma-carboxyl group of glutamic acids, arising from specific glutamines within the PIR1/2/3 repeats, and hydroxyl groups of glucoses of beta-1,3-glucan chains. In terms of processing, the propeptide is cleaved off in the late Golgi. While both peptides are secreted, only a fraction of the mature glycoprotein is incorporated into the cell wall. O-glycosylated. Extensively O-mannosylated.

It localises to the secreted. Its subcellular location is the cell wall. Its function is as follows. Component of the outer cell wall layer. Required for stability of the cell wall and for optimal growth. Required for resistance against several antifungal and cell wall-perturbing agents and for tolerance to heat shock. This chain is Cell wall mannoprotein HSP150 (HSP150), found in Saccharomyces cerevisiae (strain AWRI1631) (Baker's yeast).